The following is a 543-amino-acid chain: MPLQEETLREVWASDSGHEEDCLSPEPPLRPKQRPAQGQKLRKKKPETPDSLESKPRKAGAGRRKHEEPPADSAEPRAAQTVYAKFLRDPEAKKRDPRENFLVARAPDLGGEENSEEDSDDDDNDDDEEEEEKKEGKKEKSSLPPKKAPKEREKKAKALGPRGDVGSPDAPRKPLRTKKKEVGEGTKLRKAKKKGPGETDKDPAGSPAALRKEFPAAMFLVGEGGAAEKGVKKKGPPKGSEEEKKEEEEEVEEEVASAVMKNSNQKGRAKGKGKKKVKEERASSPPVEVGEPREFVLQPAPQGRAVRCRLTRDKKGMDRGMYPSYFLHLDTEKKVFLLAGRKRKRSKTANYLISSDPTNLSRGGENFIGKLRSNLLGNRFTVFDNGQNPQRGGGGDVGSLRQELAAVVYETNVLGFRGPRRMTVIIPGMNSDNERVPIRPRNASDGLLVRWQNKTLESLIELHNKPPIWNEDSGSYTLNFQGRVTQASVKNFQIVHADDPDYIVLQFGRVAEDAFTLDYRYPLCALQAFAIALSSFDGKLACE.

Residues 1-290 (MPLQEETLRE…RASSPPVEVG (290 aa)) form a disordered region. Basic and acidic residues-rich tracts occupy residues 46-56 (PETPDSLESKP) and 86-99 (FLRDPEAKKRDPRE). 2 stretches are compositionally biased toward acidic residues: residues 110 to 132 (GGEENSEEDSDDDDNDDDEEEEE) and 244 to 255 (KKEEEEEVEEEV). The segment covering 267-276 (GRAKGKGKKK) has biased composition (basic residues).

It belongs to the TUB family. Homodimer. May interact with ABCF1, PSIP1, ZEB1 and HMGB2 (Potential). Interacts with F-actin. Interacts with DNM1. Interacts with TUB. Interacts with TYRO3. Retina specific. Detected in the outer plexiform layer in photoreceptor cells (at protein level).

It localises to the cytoplasm. Its subcellular location is the cell membrane. The protein resides in the secreted. It is found in the synapse. Required for normal development of photoreceptor synapses. Required for normal photoreceptor function and for long-term survival of photoreceptor cells. Interacts with cytoskeleton proteins and may play a role in protein transport in photoreceptor cells. Binds lipids, especially phosphatidylinositol 3-phosphate, phosphatidylinositol 4-phosphate, phosphatidylinositol 5-phosphate, phosphatidylinositol 3,4-bisphosphate, phosphatidylinositol 4,5-bisphosphate, phosphatidylinositol 3,4,5-bisphosphate, phosphatidylserine and phosphatidic acid (in vitro). Contribute to stimulation of phagocytosis of apoptotic retinal pigment epithelium (RPE) cells and macrophages. The chain is Tubby-related protein 1 (Tulp1) from Mus musculus (Mouse).